Reading from the N-terminus, the 186-residue chain is dCTP deaminase, dUMP-forming (186 aa).

Residues 101–106 (RSSLGR), D119, 127–129 (TLE), Q148, Y162, and Q171 contribute to the dCTP site. Residue E129 is the Proton donor/acceptor of the active site.

The protein belongs to the dCTP deaminase family. As to quaternary structure, homotrimer.

The enzyme catalyses dCTP + 2 H2O = dUMP + NH4(+) + diphosphate. Its pathway is pyrimidine metabolism; dUMP biosynthesis; dUMP from dCTP: step 1/1. Functionally, bifunctional enzyme that catalyzes both the deamination of dCTP to dUTP and the hydrolysis of dUTP to dUMP without releasing the toxic dUTP intermediate. This chain is dCTP deaminase, dUMP-forming, found in Coprothermobacter proteolyticus (strain ATCC 35245 / DSM 5265 / OCM 4 / BT).